The chain runs to 176 residues: Peroxiredoxin AHP1 (176 aa).

Serine 2 carries the N-acetylserine modification. The Thioredoxin domain maps to 9 to 176; it reads FPAGDYKFQY…SSVESVLAHL (168 aa). A Phosphoserine modification is found at serine 28. A Glycyl lysine isopeptide (Lys-Gly) (interchain with G-Cter in URM1) cross-link involves residue lysine 32. Lysine 48 is covalently cross-linked (Glycyl lysine isopeptide (Lys-Gly) (interchain with G-Cter in ubiquitin); alternate). Residue lysine 48 forms a Glycyl lysine isopeptide (Lys-Gly) (interchain with G-Cter in URM1); alternate linkage. A Phosphoserine modification is found at serine 59. The Cysteine sulfenic acid (-SOH) intermediate role is filled by cysteine 62. Cysteine 62 carries the post-translational modification Cysteine persulfide. Residue lysine 79 forms a Glycyl lysine isopeptide (Lys-Gly) (interchain with G-Cter in URM1) linkage. A Glycyl lysine isopeptide (Lys-Gly) (interchain with G-Cter in ubiquitin); alternate cross-link involves residue lysine 81. A Glycyl lysine isopeptide (Lys-Gly) (interchain with G-Cter in URM1); alternate cross-link involves residue lysine 81. Lysine 107 participates in a covalent cross-link: Glycyl lysine isopeptide (Lys-Gly) (interchain with G-Cter in URM1). A Glycyl lysine isopeptide (Lys-Gly) (interchain with G-Cter in ubiquitin) cross-link involves residue lysine 113. Position 116 is a phosphoserine (serine 116). A Cysteine persulfide modification is found at cysteine 120. Lysine 124 is covalently cross-linked (Glycyl lysine isopeptide (Lys-Gly) (interchain with G-Cter in URM1)). Lysine 156 participates in a covalent cross-link: Glycyl lysine isopeptide (Lys-Gly) (interchain with G-Cter in URM1); alternate. Lysine 156 participates in a covalent cross-link: Glycyl lysine isopeptide (Lys-Gly) (interchain with G-Cter in SUMO); alternate.

The protein belongs to the peroxiredoxin family. Prx5 subfamily. In terms of assembly, homodimer; disulfide-linked, upon oxidation. Conjugated to URM1, a ubiquitin-like protein, in response to oxidative stresses. The attachment of URM1 to lysine residues exclusively depends on the presence of a peroxidatic cysteine in the target protein, with low specificity for the particular residue, motif, or structural context at which urmylation can occur. The URM1-conjugation reaction is mechanistically and directly coupled to the process of cysteine persulfidation, transfering the sulfur atom of the URM1 thiocarboxyl group to redox-active cysteine residues in the target protein if it is exposed to oxidative conditions. In terms of processing, persulfidated on specific redox-active cysteine residues. Persulfidation (also called protein S-sulfhydration) may provide a molecular mechanism that enables cells to protect vulnerable cysteine residues from reactive oxygen species (ROS) under stress conditions.

The protein localises to the cytoplasm. The enzyme catalyses a hydroperoxide + [thioredoxin]-dithiol = an alcohol + [thioredoxin]-disulfide + H2O. Functionally, thiol-specific peroxidase that catalyzes the reduction of hydrogen peroxide and organic hydroperoxides to water and alcohols, respectively. Plays a role in cell protection against oxidative stress by detoxifying peroxides and as sensor of hydrogen peroxide-mediated signaling events. Preferentially eliminates organic peroxides rather than hydrogen peroxide. Relays alkyl hydroperoxides as a signal to the transcription factor CAD1/YAP2 by inducing the formation of intramolecular disulfide bonds in CAD1, which causes its nuclear accumulation and activation. Involved in cellular Mn(2+) homeostasis. The chain is Peroxiredoxin AHP1 from Saccharomyces cerevisiae (strain ATCC 204508 / S288c) (Baker's yeast).